The following is a 114-amino-acid chain: MTANVSGIGSVLQQMQSMAAQASGGVASPTAALAGSGAATASTFASAMKASLDKISGDQQHALGEAQAFEVGAPNVSLNDVMVDMQKANIGFQFGLQVRNKLVSAYNDIMQMSV.

The protein belongs to the FliE family.

Its subcellular location is the bacterial flagellum basal body. This is Flagellar hook-basal body complex protein FliE from Burkholderia lata (strain ATCC 17760 / DSM 23089 / LMG 22485 / NCIMB 9086 / R18194 / 383).